The following is a 229-amino-acid chain: Potassium/proton antiporter CemA (229 aa).

A run of 3 helical transmembrane segments spans residues F7–F27, M106–L126, and I189–I209.

The protein belongs to the CemA family.

The protein resides in the plastid. It localises to the chloroplast inner membrane. The catalysed reaction is K(+)(in) + H(+)(out) = K(+)(out) + H(+)(in). Contributes to K(+)/H(+) antiport activity by supporting proton efflux to control proton extrusion and homeostasis in chloroplasts in a light-dependent manner to modulate photosynthesis. Prevents excessive induction of non-photochemical quenching (NPQ) under continuous-light conditions. Indirectly promotes efficient inorganic carbon uptake into chloroplasts. The polypeptide is Potassium/proton antiporter CemA (Eucalyptus globulus subsp. globulus (Tasmanian blue gum)).